The chain runs to 476 residues: Eukaryotic translation initiation factor 3 subunit L (476 aa).

Residues 257-452 form the PCI domain; the sequence is DAIRMFSHIL…DLDYALENDL (196 aa).

It belongs to the eIF-3 subunit L family. In terms of assembly, component of the eukaryotic translation initiation factor 3 (eIF-3) complex.

The protein localises to the cytoplasm. Component of the eukaryotic translation initiation factor 3 (eIF-3) complex, which is involved in protein synthesis of a specialized repertoire of mRNAs and, together with other initiation factors, stimulates binding of mRNA and methionyl-tRNAi to the 40S ribosome. The eIF-3 complex specifically targets and initiates translation of a subset of mRNAs involved in cell proliferation. This Aspergillus clavatus (strain ATCC 1007 / CBS 513.65 / DSM 816 / NCTC 3887 / NRRL 1 / QM 1276 / 107) protein is Eukaryotic translation initiation factor 3 subunit L.